We begin with the raw amino-acid sequence, 591 residues long: MDFASSKKRKFKDANGVKPSKGKKSSSIPDKKSKKVKRAEPEPHDEPEDDSSDEEEQALKEVEDESDQADEDVEAANSAEEEEEEGGDEDNAENNTDLPNGGQLTLPPVAGAEAQSFEELKLSEKTMKAINEMKFTKMTEIQRRGIPPSLAGRDVLGAAKTGSGKTLAFLIPVIEMLSSLRFKPRNGTGVIVVSPTRELALQIFGVARELMAHHSQTYGIVIGGANRRAEAEKLAKGVNLLIATPGRLLDHLQNTPFVFKNLKSLVIDEADRILEIGFEDEMRQIIKVLPKEDRQTMLFSATQTTKVEDLARISLRPGPLYINVDEEKQYSTVEGLEQGYIICETDMRFLLLFSFLKRNLKKKIIVFFSSCACVKYHAELLNYIDLPVLDLHGKQKQQKRTNTFFEFCNAKQGTLICTDVAARGLDIPSVDWIIQFDPPDDPRDYIHRVGRTARGSNNKGRSLMFLQPNELGFLSHLKAARVPVAEFNFPTKKIINVQSQLEKLISQNYYLNKSAKDGYRSYMHAYASHSLRSVFDINKLDLAKVAKSFGFTQPPRVDITLGASMSRDKKQQGRRAYGSQPRQNQGNKFTR.

Residues M1–F11 show a composition bias toward basic residues. Residues M1–P108 form a disordered region. The span at D45–A92 shows a compositional bias: acidic residues. The Q motif signature appears at Q115–R143. Residues I146–Y321 form the Helicase ATP-binding domain. A159–T166 is a binding site for ATP. The DEAD box signature appears at D268–D271. Residues G335 to I495 form the Helicase C-terminal domain. A Bipartite nuclear localization signal motif is present at residues M347–K363. The disordered stretch occupies residues T560–R591. Polar residues predominate over residues Q580–R591.

Belongs to the DEAD box helicase family. DDX18/HAS1 subfamily. In terms of assembly, associates in the nucleolus with the 60S and pre-60S ribosomal subunits.

Its subcellular location is the nucleus. The protein resides in the nucleolus. It catalyses the reaction ATP + H2O = ADP + phosphate + H(+). Functionally, ATP-dependent RNA helicase involved in 40S ribosomal subunit biogenesis. Required for the processing and cleavage of 35S pre-rRNA at sites A0, A1, and A2, leading to mature 18S rRNA. The chain is ATP-dependent RNA helicase HAS1 (HAS1) from Gibberella zeae (strain ATCC MYA-4620 / CBS 123657 / FGSC 9075 / NRRL 31084 / PH-1) (Wheat head blight fungus).